The primary structure comprises 409 residues: uncharacterized protein (409 aa).

Basic and acidic residues predominate over residues 36-50 (HLKAKARAQESDSDR). Disordered regions lie at residues 36–67 (HLKAKARAQESDSDRPCSSIESSSEPASTFSS), 239–298 (IENT…SSTI), and 338–373 (RSQIKGKDSEGRRKIQRRHKKPLAEEEADPTLTGPR). Residues 51–67 (PCSSIESSSEPASTFSS) show a composition bias toward low complexity. Residues 245-265 (VREESNQEHPPGKQEKTEKHP) show a composition bias toward basic and acidic residues. Over residues 268 to 281 (LQGSHQAEPETSSK) the composition is skewed to polar residues. Basic and acidic residues-rich tracts occupy residues 282 to 294 (NSEEYEKSLKMDD) and 338 to 350 (RSQIKGKDSEGRR).

This is an uncharacterized protein from Homo sapiens (Human).